We begin with the raw amino-acid sequence, 176 residues long: ATP synthase subunit d, mitochondrial (176 aa).

In terms of assembly, F-type ATP synthases have 2 components, the catalytic core F(1) and the membrane-embedded component F(0), linked together by a central stalk and a peripheral stalk. The central stalk, also called rotor shaft, is often seen as part of F(1). The peripheral stalk is seen as part of F(0). F(0) contains the membrane channel next to the rotor. F-type ATP synthases form dimers but each monomer functions independently in ATP generation. The dimer consists of 17 different polypeptides: ATP1 (subunit alpha, 3 molecules per monomer, part of F(1)), ATP2 (subunit beta, 3 copies per monomer, part of F(1)), ATP3 (subunit gamma, part of the central stalk), ATP4 (subunit b, part of the peripheral stalk), ATP5/OSCP (subunit 5/OSCP, part of the peripheral stalk), ATP6 (subunit a, part of the peripheral stalk), ATP7 (subunit d, part of the peripheral stalk), ATP8 (subunit 8, part of the peripheral stalk), OLI1 (subunit c, part of the rotor, 10 molecules per monomer), ATP14 (subunit h, part of the peripheral stalk), ATP15 (subunit epsilon, part of the central stalk), ATP16 (subunit delta, part of the central stalk), ATP17 (subunit f, part of the peripheral stalk), ATP18 (subunit i/j, part of the peripheral stalk), ATP19 (subunit k, dimer-specific, at interface between monomers), ATP20 (subunit g, at interface between monomers), TIM11 (subunit e, at interface between monomers).

It is found in the mitochondrion inner membrane. Its function is as follows. Mitochondrial membrane ATP synthase (F(1)F(0) ATP synthase or Complex V) produces ATP from ADP in the presence of a proton gradient across the membrane which is generated by electron transport complexes of the respiratory chain. F-type ATP synthases consist of two structural domains, F(1) - containing the extramembraneous catalytic core, and F(0) - containing the membrane proton channel, linked together by a central stalk and a peripheral stalk. During catalysis, ATP synthesis in the catalytic domain of F(1) is coupled via a rotary mechanism of the central stalk subunits to proton translocation. Part of the complex F(0) domain and the peripheral stalk, which acts as a stator to hold the catalytic alpha/ATP1(3)beta/ATP2(3) subcomplex and subunit a/ATP6 static relative to the rotary elements. This chain is ATP synthase subunit d, mitochondrial, found in Yarrowia lipolytica (strain CLIB 122 / E 150) (Yeast).